Reading from the N-terminus, the 152-residue chain is SsrA-binding protein (152 aa).

The protein belongs to the SmpB family.

It localises to the cytoplasm. Its function is as follows. Required for rescue of stalled ribosomes mediated by trans-translation. Binds to transfer-messenger RNA (tmRNA), required for stable association of tmRNA with ribosomes. tmRNA and SmpB together mimic tRNA shape, replacing the anticodon stem-loop with SmpB. tmRNA is encoded by the ssrA gene; the 2 termini fold to resemble tRNA(Ala) and it encodes a 'tag peptide', a short internal open reading frame. During trans-translation Ala-aminoacylated tmRNA acts like a tRNA, entering the A-site of stalled ribosomes, displacing the stalled mRNA. The ribosome then switches to translate the ORF on the tmRNA; the nascent peptide is terminated with the 'tag peptide' encoded by the tmRNA and targeted for degradation. The ribosome is freed to recommence translation, which seems to be the essential function of trans-translation. This chain is SsrA-binding protein, found in Gloeobacter violaceus (strain ATCC 29082 / PCC 7421).